Here is a 73-residue protein sequence, read N- to C-terminus: Small ribosomal subunit protein bS18c (73 aa).

It belongs to the bacterial ribosomal protein bS18 family. Part of the 30S ribosomal subunit.

The protein localises to the plastid. It localises to the chloroplast. In Rhodomonas salina (Cryptomonas salina), this protein is Small ribosomal subunit protein bS18c.